The sequence spans 230 residues: Urease accessory protein UreF (230 aa).

Belongs to the UreF family. As to quaternary structure, ureD, UreF and UreG form a complex that acts as a GTP-hydrolysis-dependent molecular chaperone, activating the urease apoprotein by helping to assemble the nickel containing metallocenter of UreC. The UreE protein probably delivers the nickel.

The protein localises to the cytoplasm. Required for maturation of urease via the functional incorporation of the urease nickel metallocenter. The chain is Urease accessory protein UreF from Cupriavidus pinatubonensis (strain JMP 134 / LMG 1197) (Cupriavidus necator (strain JMP 134)).